Reading from the N-terminus, the 143-residue chain is Hemoglobin subunit alpha (143 aa).

The 142-residue stretch at 2 to 143 (VLSPADKTNV…VSTVLVSKYR (142 aa)) folds into the Globin domain. Ser-4 is modified (phosphoserine). Lys-8 is modified (N6-succinyllysine). A Phosphothreonine modification is found at Thr-9. Lys-12 carries the N6-succinyllysine modification. Lys-17 carries the post-translational modification N6-acetyllysine; alternate. Residue Lys-17 is modified to N6-succinyllysine; alternate. Residue Tyr-25 is modified to Phosphotyrosine. Ser-36 carries the post-translational modification Phosphoserine. Lys-41 carries the post-translational modification N6-succinyllysine. Ser-51 is subject to Phosphoserine. Residue His-60 participates in O2 binding. Residue His-89 coordinates heme b. Ser-104 bears the Phosphoserine mark. Phosphothreonine is present on Thr-110. A Phosphoserine modification is found at Ser-126. Position 136 is a phosphothreonine (Thr-136). At Ser-140 the chain carries Phosphoserine.

The protein belongs to the globin family. In terms of assembly, heterotetramer of two alpha chains and two beta chains. In terms of tissue distribution, red blood cells.

In terms of biological role, involved in oxygen transport from the lung to the various peripheral tissues. Its function is as follows. Hemopressin acts as an antagonist peptide of the cannabinoid receptor CNR1. Hemopressin-binding efficiently blocks cannabinoid receptor CNR1 and subsequent signaling. This is Hemoglobin subunit alpha (HBA) from Pipistrellus abramus (Japanese pipistrelle).